Consider the following 437-residue polypeptide: Magnetosome protein MamN (437 aa).

The next 11 membrane-spanning stretches (helical) occupy residues 26–46 (LAVL…GSYT), 53–73 (SVYF…ALLA), 95–115 (WILV…NSLV), 136–156 (VPVI…TMIG), 174–194 (FIAG…VFFE), 226–246 (LLSY…LAGP), 252–268 (GWIA…LGRF), 281–301 (DILF…VGIL), 320–340 (AILL…GTSA), 358–378 (AAWW…LPGA), and 416–436 (WGMP…AVLV).

The protein belongs to the arsenite-antimonite (ArsB) efflux (TC 2.A.45) family.

It localises to the magnetosome membrane. Its function is as follows. Plays a role in biomineralization; might regulate pH in the magnetosome. The chain is Magnetosome protein MamN (mamN) from Paramagnetospirillum magneticum (strain ATCC 700264 / AMB-1) (Magnetospirillum magneticum).